Here is a 507-residue protein sequence, read N- to C-terminus: Protein O-glucosyltransferase 3 (507 aa).

An N-terminal signal peptide occupies residues Met1–Ala20. The stretch at Glu24 to Gly134 is one Filamin repeat. Asn61 and Asn306 each carry an N-linked (GlcNAc...) asparagine glycan. The Prevents secretion from ER motif lies at Arg504 to Leu507.

The protein belongs to the KDELC family.

The protein resides in the endoplasmic reticulum lumen. The catalysed reaction is L-seryl-[EGF-like domain protein] + UDP-alpha-D-glucose = 3-O-(beta-D-glucosyl)-L-seryl-[EGF-like domain protein] + UDP + H(+). The enzyme catalyses L-seryl-[EGF-like domain protein] + UDP-alpha-D-xylose = 3-O-(beta-D-xylosyl)-L-seryl-[EGF-like domain protein] + UDP + H(+). It participates in protein modification; protein glycosylation. Its function is as follows. Protein glucosyltransferase that catalyzes the transfer of glucose from UDP-glucose to a serine residue within the consensus sequence peptide C-X-N-T-X-G-S-F-X-C. Can also catalyze the transfer of xylose from UDP-xylose but less efficiently. Specifically targets extracellular EGF repeats of proteins such as NOTCH1, NOTCH3, FBN1, FBN2 and LTBP1. May regulate the transport of NOTCH1 and NOTCH3 to the plasma membrane and thereby the Notch signaling pathway. This chain is Protein O-glucosyltransferase 3, found in Homo sapiens (Human).